A 149-amino-acid chain; its full sequence is Alpha-crystallin A chain (149 aa).

Positions Leu41 to Pro149 constitute a sHSP domain. Residues His89, Glu91, His96, and His143 each contribute to the Zn(2+) site.

The protein belongs to the small heat shock protein (HSP20) family. In terms of assembly, heteropolymer composed of three CRYAA and one CRYAB subunits. Inter-subunit bridging via zinc ions enhances stability, which is crucial as there is no protein turn over in the lens. Can also form homodimers and homotetramers (dimers of dimers) which serve as the building blocks of homooligomers. Within homooligomers, the zinc-binding motif is created from residues of 3 different molecules. His-89 and Glu-91 from one molecule are ligands of the zinc ion, and His-96 and His-143 residues from additional molecules complete the site with tetrahedral coordination geometry.

The protein localises to the cytoplasm. The protein resides in the nucleus. Its function is as follows. Contributes to the transparency and refractive index of the lens. May act as a chaperone, preventing aggregation of various proteins under a wide range of stress conditions. The chain is Alpha-crystallin A chain (CRYAA) from Eudromia elegans (Elegant crested-tinamou).